We begin with the raw amino-acid sequence, 40 residues long: Large ribosomal subunit protein bL36B (40 aa).

The protein belongs to the bacterial ribosomal protein bL36 family.

This is Large ribosomal subunit protein bL36B from Leifsonia xyli subsp. xyli (strain CTCB07).